The chain runs to 206 residues: 2,3-bisphosphoglycerate-dependent phosphoglycerate mutase (206 aa).

Substrate-binding positions include 9–16 (RHGQSEWN), 22–23 (TG), arginine 61, 88–91 (ERDY), lysine 99, 115–116 (RR), and 159–160 (GN). The active-site Tele-phosphohistidine intermediate is histidine 10. Glutamate 88 acts as the Proton donor/acceptor in catalysis.

It belongs to the phosphoglycerate mutase family. BPG-dependent PGAM subfamily. Homodimer.

The enzyme catalyses (2R)-2-phosphoglycerate = (2R)-3-phosphoglycerate. It participates in carbohydrate degradation; glycolysis; pyruvate from D-glyceraldehyde 3-phosphate: step 3/5. Its function is as follows. Catalyzes the interconversion of 2-phosphoglycerate and 3-phosphoglycerate. The chain is 2,3-bisphosphoglycerate-dependent phosphoglycerate mutase from Bartonella quintana (strain Toulouse) (Rochalimaea quintana).